A 185-amino-acid chain; its full sequence is uncharacterized protein (185 aa).

A chloroplast-targeting transit peptide spans 1–56 (MSSFTIPSPSSFSLSNSYNQTSPHSFTLRNSRSNFEFHRLRLDVESRRRSTSLRSN). The disordered stretch occupies residues 48-67 (RRSTSLRSNCSTKGTDSGEN). Over residues 52–64 (SLRSNCSTKGTDS) the composition is skewed to polar residues. Residues 105-138 (QAEQQKQVQEIQEEVLERAKKAKERAARETMEEQ) adopt a coiled-coil conformation.

The protein localises to the plastid. The protein resides in the chloroplast. Its subcellular location is the plastoglobule. This is an uncharacterized protein from Arabidopsis thaliana (Mouse-ear cress).